Here is a 445-residue protein sequence, read N- to C-terminus: Argininosuccinate synthase (445 aa).

ATP-binding positions include 17-25 (AFSGGLDTS) and Ala43. Tyr99 is an L-citrulline binding site. Gly129 and Thr131 together coordinate ATP. L-aspartate-binding residues include Thr131, Asn135, and Asp136. An L-citrulline-binding site is contributed by Asn135. ATP is bound at residue Asp136. The L-citrulline site is built by Arg139 and Ser192. Asp194 serves as a coordination point for ATP. Residues Thr201, Glu203, and Glu280 each contribute to the L-citrulline site.

It belongs to the argininosuccinate synthase family. Type 2 subfamily. In terms of assembly, homotetramer.

The protein resides in the cytoplasm. The enzyme catalyses L-citrulline + L-aspartate + ATP = 2-(N(omega)-L-arginino)succinate + AMP + diphosphate + H(+). It functions in the pathway amino-acid biosynthesis; L-arginine biosynthesis; L-arginine from L-ornithine and carbamoyl phosphate: step 2/3. In Burkholderia ambifaria (strain MC40-6), this protein is Argininosuccinate synthase.